A 292-amino-acid chain; its full sequence is ATP synthase gamma chain (292 aa).

This sequence belongs to the ATPase gamma chain family. F-type ATPases have 2 components, CF(1) - the catalytic core - and CF(0) - the membrane proton channel. CF(1) has five subunits: alpha(3), beta(3), gamma(1), delta(1), epsilon(1). CF(0) has three main subunits: a, b and c.

Its subcellular location is the cell inner membrane. Functionally, produces ATP from ADP in the presence of a proton gradient across the membrane. The gamma chain is believed to be important in regulating ATPase activity and the flow of protons through the CF(0) complex. In Methylobacterium nodulans (strain LMG 21967 / CNCM I-2342 / ORS 2060), this protein is ATP synthase gamma chain.